Reading from the N-terminus, the 292-residue chain is 4-diphosphocytidyl-2-C-methyl-D-erythritol kinase (292 aa).

Residue lysine 10 is part of the active site. An ATP-binding site is contributed by 100 to 110 (PIGSGLGGGSS). Residue aspartate 142 is part of the active site.

It belongs to the GHMP kinase family. IspE subfamily. Homodimer.

The catalysed reaction is 4-CDP-2-C-methyl-D-erythritol + ATP = 4-CDP-2-C-methyl-D-erythritol 2-phosphate + ADP + H(+). It participates in isoprenoid biosynthesis; isopentenyl diphosphate biosynthesis via DXP pathway; isopentenyl diphosphate from 1-deoxy-D-xylulose 5-phosphate: step 3/6. Catalyzes the phosphorylation of the position 2 hydroxy group of 4-diphosphocytidyl-2C-methyl-D-erythritol. This is 4-diphosphocytidyl-2-C-methyl-D-erythritol kinase from Buchnera aphidicola subsp. Schizaphis graminum (strain Sg).